Consider the following 1076-residue polypeptide: Vacuolar membrane protease (1076 aa).

At methionine 1–proline 11 the chain is on the cytoplasmic side. A helical membrane pass occupies residues methionine 12 to isoleucine 32. The Vacuolar portion of the chain corresponds to histidine 33–threonine 437. 3 N-linked (GlcNAc...) asparagine glycosylation sites follow: asparagine 50, asparagine 99, and asparagine 156. 2 residues coordinate Zn(2+): histidine 220 and aspartate 232. Catalysis depends on glutamate 266, which acts as the Proton acceptor. Zn(2+) is bound by residues glutamate 267, glutamate 292, and histidine 364. The helical transmembrane segment at leucine 438–tyrosine 458 threads the bilayer. Topologically, residues leucine 459–alanine 491 are cytoplasmic. A helical membrane pass occupies residues phenylalanine 492 to isoleucine 512. The Vacuolar portion of the chain corresponds to asparagine 513–tyrosine 525. A helical transmembrane segment spans residues alanine 526 to cysteine 546. The Cytoplasmic segment spans residues asparagine 547–arginine 556. A helical membrane pass occupies residues glycine 557–tyrosine 577. The Vacuolar segment spans residues glutamate 578–serine 584. A helical transmembrane segment spans residues glycine 585–cysteine 605. Residues glutamate 606–tyrosine 738 are Cytoplasmic-facing. 2 disordered regions span residues aspartate 619 to valine 662 and serine 701 to glycine 720. A compositionally biased stretch (basic and acidic residues) spans glutamine 621–histidine 632. Residues proline 647–glutamate 660 are compositionally biased toward acidic residues. A helical membrane pass occupies residues leucine 739–alanine 759. At leucine 760–phenylalanine 771 the chain is on the vacuolar side. The helical transmembrane segment at leucine 772–isoleucine 792 threads the bilayer. Topologically, residues histidine 793 to methionine 799 are cytoplasmic. A helical membrane pass occupies residues proline 800–phenylalanine 820. Residues serine 821 to valine 1076 are Vacuolar-facing. Asparagine 912 carries an N-linked (GlcNAc...) asparagine glycan.

The protein belongs to the peptidase M28 family. Requires Zn(2+) as cofactor.

It is found in the vacuole membrane. Its function is as follows. May be involved in vacuolar sorting and osmoregulation. The polypeptide is Vacuolar membrane protease (Sclerotinia sclerotiorum (strain ATCC 18683 / 1980 / Ss-1) (White mold)).